The primary structure comprises 256 residues: Gramicidin S biosynthesis protein GrsT (256 aa).

S95 is an active-site residue.

It belongs to the thioesterase family.

It functions in the pathway antibiotic biosynthesis; gramicidin S biosynthesis. Probable thioesterase involved in the biosynthesis of gramicidin S. The chain is Gramicidin S biosynthesis protein GrsT (grsT) from Aneurinibacillus migulanus (Bacillus migulanus).